A 104-amino-acid polypeptide reads, in one-letter code: Phosphoribosyl-ATP pyrophosphatase (104 aa).

It belongs to the PRA-PH family.

It localises to the cytoplasm. It carries out the reaction 1-(5-phospho-beta-D-ribosyl)-ATP + H2O = 1-(5-phospho-beta-D-ribosyl)-5'-AMP + diphosphate + H(+). The protein operates within amino-acid biosynthesis; L-histidine biosynthesis; L-histidine from 5-phospho-alpha-D-ribose 1-diphosphate: step 2/9. The protein is Phosphoribosyl-ATP pyrophosphatase of Methanocorpusculum labreanum (strain ATCC 43576 / DSM 4855 / Z).